The primary structure comprises 498 residues: Lysine--tRNA ligase (498 aa).

2 residues coordinate Mg(2+): Glu407 and Glu414.

It belongs to the class-II aminoacyl-tRNA synthetase family. In terms of assembly, homodimer. The cofactor is Mg(2+).

The protein localises to the cytoplasm. The catalysed reaction is tRNA(Lys) + L-lysine + ATP = L-lysyl-tRNA(Lys) + AMP + diphosphate. This chain is Lysine--tRNA ligase, found in Sinorhizobium medicae (strain WSM419) (Ensifer medicae).